A 502-amino-acid chain; its full sequence is Ubiquitin-like-specific protease 1A (502 aa).

Active-site residues include His393, Asp410, and Cys461.

The protein belongs to the peptidase C48 family.

Its function is as follows. Protease that catalyzes two essential functions in the SUMO pathway: processing of full-length SUMOs to their mature forms and deconjugation of SUMO from targeted proteins. Cleaves precursors of SUM1 and SUM2, and very inefficiently of SUM3. Seems to be the only ULP1 able to cleave SUM3 precursors. Cleaves SUMO peptides better than SUMO-conjugated proteins. The protein is Ubiquitin-like-specific protease 1A (ULP1A) of Arabidopsis thaliana (Mouse-ear cress).